The following is a 930-amino-acid chain: Progesterone receptor (930 aa).

The segment covering 1-11 (MTELKAKEPRA) has biased composition (basic and acidic residues). Disordered stretches follow at residues 1–133 (MTEL…ASPA) and 148–260 (LPED…SGAA). Residues 1 to 165 (MTELKAKEPR…PATKGVLAPL (165 aa)) are AF3; mediates transcriptional activation. Residues 1–565 (MTELKAKEPR…PQYSFESLPQ (565 aa)) form a modulating, Pro-Rich region. Lys7 is covalently cross-linked (Glycyl lysine isopeptide (Lys-Gly) (interchain with G-Cter in SUMO)). Ser20 bears the Phosphoserine mark. Polar residues predominate over residues 38-49 (QGSQTSEASSVV). The LXXL motif 1 motif lies at 56 to 60 (LDGLL). Phosphoserine is present on Ser82. An LXXL motif 2 motif is present at residues 116 to 120 (LDTLL). At Ser131 the chain carries Phosphoserine. Residues 166–304 (MSRPEDKAGD…LATSVVDFIH (139 aa)) form a mediates transcriptional transrepression region. The short motif at 184–188 (KVLPR) is the Nuclear localization signal element. Positions 187 to 204 (PRGLSPSRQLLLPSSGSP) are enriched in low complexity. Phosphoserine is present on residues Ser191 and Ser212. Position 293 is a phosphoserine; by MAPK1 (Ser293). The interval 334–356 (AASPFVPQRGSPSASSTPVAGGD) is disordered. Residue Ser344 is modified to Phosphoserine; by MAPK. Lys387 is covalently cross-linked (Glycyl lysine isopeptide (Lys-Gly) (interchain with G-Cter in SUMO); alternate). A Glycyl lysine isopeptide (Lys-Gly) (interchain with G-Cter in ubiquitin); alternate cross-link involves residue Lys387. Position 399 is a phosphoserine; by CDK2 (Ser399). A disordered region spans residues 415–454 (DFQLAAPPPPSLPPRVPSSRPGEAAVAASPGSASVSSSSS). Residues 420-430 (APPPPSLPPRV) are compositionally biased toward pro residues. The span at 431 to 454 (PSSRPGEAAVAASPGSASVSSSSS) shows a compositional bias: low complexity. The interval 457–547 (STLECILYKA…VYTPYLNYLR (91 aa)) is AF1; mediates transcriptional activation. A Glycyl lysine isopeptide (Lys-Gly) (interchain with G-Cter in SUMO) cross-link involves residue Lys532. Positions 566-640 (KICLICGDEA…AGMVLGGRKF (75 aa)) form a DNA-binding region, nuclear receptor. NR C4-type zinc fingers lie at residues 568–588 (CLIC…CGSC) and 604–628 (CAGR…LRKC). Ser673 carries the post-translational modification Phosphoserine. The 235-residue stretch at 676–910 (QEIQLIPPLI…EFPEMMSEVI (235 aa)) folds into the NR LBD domain. The interval 684–930 (LINLLMSIEP…MVKPLLFHKK (247 aa)) is AF2; mediates transcriptional activation. Arg763 contributes to the progesterone binding site.

This sequence belongs to the nuclear hormone receptor family. NR3 subfamily. In terms of assembly, interacts with SMARD1 and UNC45A. Interacts with CUEDC2; the interaction promotes ubiquitination, decreases sumoylation, and represses transcriptional activity. Interacts with PIAS3; the interaction promotes sumoylation of PR in a hormone-dependent manner, inhibits DNA-binding, and alters nuclear export. Interacts with SP1; the interaction requires ligand-induced phosphorylation on Ser-344 by ERK1/2-MAPK. Interacts with PRMT2. Interacts with NCOA2 and NCOA1. Interacts with KLF9. Interacts with GTF2B. Post-translationally, phosphorylated on multiple serine sites. Several of these sites are hormone-dependent. Phosphorylation on Ser-293 is highly hormone-dependent and modulates ubiquitination and sumoylation on Lys-387. Phosphorylation on Ser-102 and Ser-344 also requires induction by hormone. Basal phosphorylation on Ser-82, Ser-191 and Ser-399 is increased in response to progesterone and can be phosphorylated in vitro by the CDK2-A1 complex. Increased levels of phosphorylation on Ser-399 also in the presence of EGF, heregulin, IGF, PMA and FBS. Phosphorylation at this site by CDK2 is ligand-independent, and increases nuclear translocation and transcriptional activity. Phosphorylation at Ser-293, but not at Ser-191, is impaired during the G(2)/M phase of the cell cycle. Phosphorylation on Ser-344 by ERK1/2 MAPK is required for interaction with SP1. In terms of processing, sumoylation is hormone-dependent and represses transcriptional activity. Sumoylation on all three sites is enhanced by PIAS3. Desumoylated by SENP1. Sumoylation on Lys-387, the main site of sumoylation, is repressed by ubiquitination on the same site, and modulated by phosphorylation at Ser-293. Ubiquitination is hormone-dependent and represses sumoylation on the same site. Promoted by MAPK-mediated phosphorylation on Ser-293. Ubiquitinated by UBR5, leading to its degradation: UBR5 specifically recognizes and binds ligand-bound PGR when it is not associated with coactivators (NCOAs). In presence of NCOAs, the UBR5-degron is not accessible, preventing its ubiquitination and degradation. Post-translationally, palmitoylated by ZDHHC7 and ZDHHC21. Palmitoylation is required for plasma membrane targeting and for rapid intracellular signaling via ERK and AKT kinases and cAMP generation.

It localises to the nucleus. The protein localises to the cytoplasm. In terms of biological role, the steroid hormones and their receptors are involved in the regulation of eukaryotic gene expression and affect cellular proliferation and differentiation in target tissues. Transcriptional activator of several progesteron-dependent promoters in a variety of cell types. Involved in activation of SRC-dependent MAPK signaling on hormone stimulation. The chain is Progesterone receptor (PGR) from Oryctolagus cuniculus (Rabbit).